We begin with the raw amino-acid sequence, 294 residues long: Acetyl-coenzyme A carboxylase carboxyl transferase subunit beta (294 aa).

A CoA carboxyltransferase N-terminal domain is found at 29-294; that stretch reads LWEKCPECGQ…TQEVKLQTNA (266 aa). Residues Cys-33, Cys-36, Cys-52, and Cys-55 each coordinate Zn(2+). A C4-type zinc finger spans residues 33–55; that stretch reads CPECGQVVYRKDLIDNCSVCSNC.

The protein belongs to the AccD/PCCB family. Acetyl-CoA carboxylase is a heterohexamer composed of biotin carboxyl carrier protein (AccB), biotin carboxylase (AccC) and two subunits each of ACCase subunit alpha (AccA) and ACCase subunit beta (AccD). The cofactor is Zn(2+).

The protein localises to the cytoplasm. It carries out the reaction N(6)-carboxybiotinyl-L-lysyl-[protein] + acetyl-CoA = N(6)-biotinyl-L-lysyl-[protein] + malonyl-CoA. The protein operates within lipid metabolism; malonyl-CoA biosynthesis; malonyl-CoA from acetyl-CoA: step 1/1. Functionally, component of the acetyl coenzyme A carboxylase (ACC) complex. Biotin carboxylase (BC) catalyzes the carboxylation of biotin on its carrier protein (BCCP) and then the CO(2) group is transferred by the transcarboxylase to acetyl-CoA to form malonyl-CoA. The sequence is that of Acetyl-coenzyme A carboxylase carboxyl transferase subunit beta from Prochlorococcus marinus (strain NATL1A).